Here is a 1714-residue protein sequence, read N- to C-terminus: Collagen alpha-1(XXIV) chain (1714 aa).

Residues 1-35 (MHLRAHRTRRGKVSPTAKTKSLLHFIVLCVAGVVV) form the signal peptide. The region spanning 141-217 (KLVVHIRGKQ…MNNNSIHFEG (77 aa)) is the Laminin G-like domain. N-linked (GlcNAc...) asparagine glycosylation is found at asparagine 155, asparagine 321, and asparagine 376. 17 consecutive Collagen-like domains span residues 487-542 (LRGP…PGFS), 552-611 (GDQG…EGNP), 660-719 (GPAG…KGEQ), 741-797 (GPPG…RGPP), 798-857 (GPPG…TGPV), 858-887 (GLPG…QGEK), 888-947 (GVMG…KGEK), 948-1007 (GDQG…PGEM), 1011-1052 (GPPG…PGAP), 1053-1112 (GEEG…PGQR), 1116-1170 (GKKG…GIPG), 1172-1196 (RGHQ…PGED), 1201-1249 (GPPG…GEPG), 1252-1306 (GEQG…GNPG), 1309-1353 (GPPG…QGPK), 1354-1413 (GEQG…EGDA), and 1420-1479 (GPKG…PGPR). The disordered stretch occupies residues 487–1481 (LRGPKGDTGP…PPGAPGPRKQ (995 aa)). Residues 496–505 (PPGPPGPAGI) are compositionally biased toward pro residues. Low complexity-rich tracts occupy residues 574–587 (HPGL…QGIP) and 685–701 (SVGP…PGPM). Positions 893 to 902 (PGPPGVPGPI) are enriched in pro residues. The segment covering 985 to 1019 (DRGLPGEPGLRGLQGDVGPPGEMGMEGPPGTEGES) has biased composition (low complexity). Composition is skewed to gly residues over residues 1035–1044 (GSVGGTGEPG) and 1065–1074 (GVPGGRGLPG). Composition is skewed to low complexity over residues 1132 to 1145 (SRGP…SGPK) and 1174 to 1186 (HQGQ…LPGP). The span at 1256–1266 (LKGERGSEGNK) shows a compositional bias: basic and acidic residues. A compositionally biased stretch (low complexity) spans 1271–1293 (APGPSGKPGIPGLQGLLGPKGIQ). Positions 1318–1327 (GIRGGPGRTG) are enriched in gly residues. The span at 1466-1476 (QPGPPGPPGAP) shows a compositional bias: pro residues. The region spanning 1515–1714 (EEIFKTLNYL…YIDSSSVCFL (200 aa)) is the Fibrillar collagen NC1 domain.

This sequence belongs to the fibrillar collagen family.

The protein resides in the secreted. It is found in the extracellular space. The protein localises to the extracellular matrix. In terms of biological role, may participate in regulating type I collagen fibrillogenesis at specific anatomical locations during fetal development. This Homo sapiens (Human) protein is Collagen alpha-1(XXIV) chain (COL24A1).